The chain runs to 65 residues: Large ribosomal subunit protein bL35 (65 aa).

This sequence belongs to the bacterial ribosomal protein bL35 family.

The chain is Large ribosomal subunit protein bL35 from Nitrosomonas europaea (strain ATCC 19718 / CIP 103999 / KCTC 2705 / NBRC 14298).